Here is a 94-residue protein sequence, read N- to C-terminus: MTAERNLRKTRVGVVTSDKMDKTVVVAVETLVQHPLYKKRVRRTKKFKAHDEHNQCKVGDKVRIMETRPLSKEKRWRVVEIIESAPDYKSAPEV.

It belongs to the universal ribosomal protein uS17 family. As to quaternary structure, part of the 30S ribosomal subunit.

Functionally, one of the primary rRNA binding proteins, it binds specifically to the 5'-end of 16S ribosomal RNA. The polypeptide is Small ribosomal subunit protein uS17 (Symbiobacterium thermophilum (strain DSM 24528 / JCM 14929 / IAM 14863 / T)).